A 408-amino-acid chain; its full sequence is MESRVLSSGATTISGIPRLTRPAGRTTTTTVVAVASPAKLNTNGGNLVWGRQLRPSLLNLDHSSPVSLVTKPVKRDVLKPCTATASDSAGDAAPVGFFAKYPFLVTGFFFFMWYFLNVIFNILNKKIYNYFPYPYFVSAIHLAVGVVYCLGGWAVGLPKRAPMDSNLLKLLIPVAFCHALGHVTSNVSFAAVAVSFTHTIKSLEPFFNAAASQFILGQSIPITLWLSLAPVVIGVSMASLTELSFNWLGFISAMISNISFTYRSIYSKKAMTDMDSTNLYAYISIISLLFCIPPAIILEGPQLLKHGFSDAIAKVGMTKFISDLFWVGMFYHLYNQLAINTLERVAPLTHAVGNVLKRVFVIGFSIIVFGNKISTQTAIGTSIAIAGVAVYSLIKAKIEEEKRGLKSA.

The transit peptide at Met-1–Thr-82 directs the protein to the chloroplast. Over Ala-83 to Pro-102 the chain is Chloroplast intermembrane. Residues Phe-103–Leu-123 traverse the membrane as a helical segment. Over Asn-124–Tyr-135 the chain is Lumenal. A helical transmembrane segment spans residues Phe-136–Gly-156. At Leu-157 to Gln-213 the chain is on the chloroplast intermembrane side. Residues Phe-214–Gly-234 form a helical membrane-spanning segment. Residues Val-235–Asn-278 lie on the Lumenal side of the membrane. A helical transmembrane segment spans residues Leu-279–Leu-298. Topologically, residues Glu-299–Gln-376 are chloroplast intermembrane. Residues Thr-377–Lys-397 traverse the membrane as a helical segment. Residues Ile-398–Ala-408 lie on the Lumenal side of the membrane.

It belongs to the TPT transporter family. TPT (TC 2.A.7.9) subfamily. In terms of assembly, homodimer.

It is found in the plastid. It localises to the chloroplast membrane. In terms of biological role, mediates the export of fixed carbons from the chloroplasts into the cytosol in the form of triose phosphates. This chain is Triose phosphate/phosphate translocator, chloroplastic (TPT), found in Flaveria pringlei.